The following is a 456-amino-acid chain: Hydroxyproline dehydrogenase (456 aa).

Lys-310 and Lys-320 each carry N6-acetyllysine.

It belongs to the proline oxidase family. FAD is required as a cofactor.

It carries out the reaction trans-4-hydroxy-L-proline + a quinone = (3R,5S)-1-pyrroline-3-hydroxy-5-carboxylate + a quinol + H(+). It catalyses the reaction L-proline + a quinone = (S)-1-pyrroline-5-carboxylate + a quinol + H(+). Its function is as follows. Dehydrogenase that converts trans-4-L-hydroxyproline to delta-1-pyrroline-3-hydroxy-5-carboxylate (Hyp) using ubiquinone-10 as the terminal electron acceptor. Can also use proline as a substrate but with a very much lower efficiency. Does not react with other diastereomers of Hyp: trans-4-D-hydroxyproline and cis-4-L-hydroxyproline. Ubiquininone analogs such as menadione, duroquinone and ubiquinone-1 react more efficiently than oxygen as the terminal electron acceptor during catalysis. The sequence is that of Hydroxyproline dehydrogenase from Mus musculus (Mouse).